Reading from the N-terminus, the 534-residue chain is Cytochrome P450 78A9 (534 aa).

The helical transmembrane segment at 26-46 threads the bilayer; that stretch reads LALSLLVASLASLALSLFFWS. C474 contacts heme.

Belongs to the cytochrome P450 family. It depends on heme as a cofactor. Expressed in the funiculus of developing ovules.

The protein localises to the membrane. Its function is as follows. Plays a role in seed and fruit development. Functions probably in association with CYP78A6 in the regulation of seed growth. This Arabidopsis thaliana (Mouse-ear cress) protein is Cytochrome P450 78A9 (CYP78A9).